Consider the following 1011-residue polypeptide: Lysosomal alpha-mannosidase (1011 aa).

The N-terminal stretch at M1–A49 is a signal peptide. 2 disulfide bridges follow: C55-C358 and C268-C273. Positions 72 and 74 each coordinate Zn(2+). N133 carries an N-linked (GlcNAc...) asparagine glycan. Position 196 (D196) interacts with Zn(2+). D196 functions as the Nucleophile in the catalytic mechanism. 2 N-linked (GlcNAc...) asparagine glycosylation sites follow: N310 and N367. 2 disulfide bridges follow: C412-C472 and C493-C501. H446 is a binding site for Zn(2+). N-linked (GlcNAc...) asparagine glycans are attached at residues N497, N645, N651, N692, N766, N832, N930, and N989.

This sequence belongs to the glycosyl hydrolase 38 family. The cofactor is Zn(2+). Post-translationally, first processed into 3 peptides of 70 kDa, 42 kDa (D) and 13/15 kDa (E). The 70 kDa peptide is further processed into three peptides (A, B and C). The A, B and C peptides are disulfide-linked. Heavily glycosylated.

It localises to the lysosome. It catalyses the reaction Hydrolysis of terminal, non-reducing alpha-D-mannose residues in alpha-D-mannosides.. In terms of biological role, necessary for the catabolism of N-linked carbohydrates released during glycoprotein turnover. Cleaves all known types of alpha-mannosidic linkages. This chain is Lysosomal alpha-mannosidase (MAN2B1), found in Homo sapiens (Human).